Here is a 430-residue protein sequence, read N- to C-terminus: Adenylosuccinate synthetase (430 aa).

Residues 12-18 (GDEGKGK) and 40-42 (GHT) contribute to the GTP site. The Proton acceptor role is filled by Asp13. Residues Asp13 and Gly40 each contribute to the Mg(2+) site. IMP-binding positions include 13–16 (DEGK), 38–41 (NAGH), Thr130, Arg144, Gln224, Thr239, and Arg303. His41 serves as the catalytic Proton donor. 299 to 305 (TVTGRKR) is a substrate binding site. Residues Arg305, 331–333 (KLD), and 413–415 (STS) each bind GTP.

The protein belongs to the adenylosuccinate synthetase family. Homodimer. Mg(2+) is required as a cofactor.

Its subcellular location is the cytoplasm. The enzyme catalyses IMP + L-aspartate + GTP = N(6)-(1,2-dicarboxyethyl)-AMP + GDP + phosphate + 2 H(+). Its pathway is purine metabolism; AMP biosynthesis via de novo pathway; AMP from IMP: step 1/2. Plays an important role in the de novo pathway of purine nucleotide biosynthesis. Catalyzes the first committed step in the biosynthesis of AMP from IMP. In Parvibaculum lavamentivorans (strain DS-1 / DSM 13023 / NCIMB 13966), this protein is Adenylosuccinate synthetase.